Reading from the N-terminus, the 147-residue chain is MVHWSAEEKQLITGLWGKVNVEECGAEALARLLIVYPWTQRFFSSFGNLSSPTAIIGNPKVPPHGRKFFTSFGEPVKNLDNIKNTYAKLSELHCEKLQVEPENFRLLGDILIIVLASHFARDFTPACQFPWQKLVSVVAHALPRKYH.

The region spanning 3–147 is the Globin domain; the sequence is HWSAEEKQLI…VAHALPRKYH (145 aa). Histidine 64 and histidine 93 together coordinate heme b.

This sequence belongs to the globin family. As to quaternary structure, heterotetramer of two epsilon chains and two alpha chains. Red blood cells.

In terms of biological role, beta-type chain found in early embryos. This Cairina moschata (Muscovy duck) protein is Hemoglobin subunit epsilon (HBE).